The following is a 402-amino-acid chain: Protein kinase US3 homolog (402 aa).

Disordered regions lie at residues 1–21 (MSSS…KVHD) and 46–88 (FPDS…SPET). The Protein kinase domain maps to 102–386 (YNIVSSLSPG…AQDILMLPLF (285 aa)). ATP contacts are provided by residues 108 to 116 (LSPGSEGYI) and K129. D218 serves as the catalytic Proton acceptor.

The protein belongs to the protein kinase superfamily. Ser/Thr protein kinase family. In terms of processing, phosphorylated by UL13 homolog; this phosphorylation regulates subsequent phosphorylation of UL31 and UL34 homologs by US3. Autophosphorylated.

The protein localises to the host cytoplasm. It is found in the host nucleus. The catalysed reaction is L-seryl-[protein] + ATP = O-phospho-L-seryl-[protein] + ADP + H(+). It catalyses the reaction L-threonyl-[protein] + ATP = O-phospho-L-threonyl-[protein] + ADP + H(+). Its function is as follows. Multifunctional serine/threonine kinase that plays a role in several processes including egress of virus particles from the nucleus, modulation of the actin cytoskeleton and inhibition of apoptosis. Phosphorylates UL31 and UL34 homologs, two critical regulators of capsid budding from nucleus to endoplasmic reticulum, thereby facilitating virion egress. Modulates and redistributes host components of the nuclear envelope, including LMNA, emerin/EMD and the nuclear matrix protein MATR3. Phosphorylates envelope glycoprotein B (gB), probably to direct it to the cell surface. Promotes virus intracellular spread by restructuring host cell cytoskeleton. Blocks host apoptosis to extend cell survival and allow efficient viral replication. Promotes viral gene expression by phosphorylating host HDAC2 to reduce viral genome silencing. The protein is Protein kinase US3 homolog (MDV092) of Gallus gallus (Chicken).